A 142-amino-acid polypeptide reads, in one-letter code: Large ribosomal subunit protein uL11 (142 aa).

The protein belongs to the universal ribosomal protein uL11 family. Part of the ribosomal stalk of the 50S ribosomal subunit. Interacts with L10 and the large rRNA to form the base of the stalk. L10 forms an elongated spine to which L12 dimers bind in a sequential fashion forming a multimeric L10(L12)X complex. Post-translationally, one or more lysine residues are methylated.

Functionally, forms part of the ribosomal stalk which helps the ribosome interact with GTP-bound translation factors. The protein is Large ribosomal subunit protein uL11 of Yersinia pestis bv. Antiqua (strain Angola).